Consider the following 488-residue polypeptide: UDP-N-acetylmuramoyl-L-alanyl-D-glutamate--2,6-diaminopimelate ligase (488 aa).

Residues Leu-24, Ser-26, and 41 to 43 (HQV) contribute to the UDP-N-acetyl-alpha-D-muramoyl-L-alanyl-D-glutamate site. Residue 113 to 119 (GTNGKTT) participates in ATP binding. Residues Asn-154, 155–156 (TT), Ser-182, Gln-188, and Arg-190 each bind UDP-N-acetyl-alpha-D-muramoyl-L-alanyl-D-glutamate. The residue at position 222 (Lys-222) is an N6-carboxylysine. Meso-2,6-diaminopimelate-binding positions include Arg-386, 410 to 413 (DNPR), Gly-461, and Glu-465. The short motif at 410–413 (DNPR) is the Meso-diaminopimelate recognition motif element.

This sequence belongs to the MurCDEF family. MurE subfamily. The cofactor is Mg(2+). In terms of processing, carboxylation is probably crucial for Mg(2+) binding and, consequently, for the gamma-phosphate positioning of ATP.

The protein resides in the cytoplasm. The enzyme catalyses UDP-N-acetyl-alpha-D-muramoyl-L-alanyl-D-glutamate + meso-2,6-diaminopimelate + ATP = UDP-N-acetyl-alpha-D-muramoyl-L-alanyl-gamma-D-glutamyl-meso-2,6-diaminopimelate + ADP + phosphate + H(+). It functions in the pathway cell wall biogenesis; peptidoglycan biosynthesis. Its function is as follows. Catalyzes the addition of meso-diaminopimelic acid to the nucleotide precursor UDP-N-acetylmuramoyl-L-alanyl-D-glutamate (UMAG) in the biosynthesis of bacterial cell-wall peptidoglycan. The protein is UDP-N-acetylmuramoyl-L-alanyl-D-glutamate--2,6-diaminopimelate ligase of Haemophilus influenzae (strain PittGG).